A 350-amino-acid polypeptide reads, in one-letter code: Probable dTDP-glucose 4,6-dehydratase (350 aa).

7–13 contacts NAD(+); sequence GGAGFIG. Residue T132 participates in substrate binding. D133 functions as the Proton donor in the catalytic mechanism. Active-site proton acceptor residues include E134 and Y157.

Belongs to the NAD(P)-dependent epimerase/dehydratase family. dTDP-glucose dehydratase subfamily. NAD(+) serves as cofactor.

The enzyme catalyses dTDP-alpha-D-glucose = dTDP-4-dehydro-6-deoxy-alpha-D-glucose + H2O. Its pathway is carbohydrate biosynthesis; dTDP-L-rhamnose biosynthesis. The chain is Probable dTDP-glucose 4,6-dehydratase from Sinorhizobium fredii (strain NBRC 101917 / NGR234).